The primary structure comprises 261 residues: Putative cysteine protease YopT-like y4zC (261 aa).

The span at 1-15 (MHSPISGSFTSSTQV) shows a compositional bias: polar residues. Disordered regions lie at residues 1–48 (MHSP…CPDK) and 54–73 (SKPQ…ARPS). The segment covering 61–73 (PNNPSTSSPARPS) has biased composition (low complexity). Residues Cys93, His205, and Asp220 contribute to the active site.

This sequence belongs to the peptidase C58 family.

Functionally, potential cysteine protease, which may play a central role after invasion of host cell. The chain is Putative cysteine protease YopT-like y4zC from Sinorhizobium fredii (strain NBRC 101917 / NGR234).